The primary structure comprises 102 residues: Protein S100-A11 (102 aa).

Ser2 bears the Phosphoserine mark. Thr7 is modified (phosphothreonine). EF-hand domains lie at 12–47 (ESLI…LAAF) and 52–87 (KDPG…LAVA). Lys24 bears the N6-acetyllysine mark. 8 residues coordinate Ca(2+): Ser28, Thr30, Glu35, Asp65, Asn67, Asp69, Gln71, and Glu76.

This sequence belongs to the S-100 family. Homodimer; disulfide-linked. Post-translationally, phosphorylation at Thr-7 significantly suppresses homodimerization and promotes association with NCL/nucleolin which induces nuclear translocation. In terms of tissue distribution, smooth muscle and non-muscle tissues.

Its subcellular location is the cytoplasm. It is found in the nucleus. Facilitates the differentiation and the cornification of keratinocytes. This is Protein S100-A11 (S100A11) from Oryctolagus cuniculus (Rabbit).